Consider the following 313-residue polypeptide: Aspartate carbamoyltransferase catalytic subunit (313 aa).

Residues Arg61 and Thr62 each contribute to the carbamoyl phosphate site. Position 89 (Lys89) interacts with L-aspartate. Residues Arg111, His139, and Gln142 each coordinate carbamoyl phosphate. L-aspartate is bound by residues Arg172 and Arg227. The carbamoyl phosphate site is built by Gly268 and Pro269.

The protein belongs to the aspartate/ornithine carbamoyltransferase superfamily. ATCase family. In terms of assembly, heterododecamer (2C3:3R2) of six catalytic PyrB chains organized as two trimers (C3), and six regulatory PyrI chains organized as three dimers (R2).

The enzyme catalyses carbamoyl phosphate + L-aspartate = N-carbamoyl-L-aspartate + phosphate + H(+). Its pathway is pyrimidine metabolism; UMP biosynthesis via de novo pathway; (S)-dihydroorotate from bicarbonate: step 2/3. Its function is as follows. Catalyzes the condensation of carbamoyl phosphate and aspartate to form carbamoyl aspartate and inorganic phosphate, the committed step in the de novo pyrimidine nucleotide biosynthesis pathway. This is Aspartate carbamoyltransferase catalytic subunit from Gluconobacter oxydans (strain 621H) (Gluconobacter suboxydans).